The sequence spans 393 residues: NAD(P)H-quinone oxidoreductase subunit H, chloroplastic (393 aa).

This sequence belongs to the complex I 49 kDa subunit family. In terms of assembly, NDH is composed of at least 16 different subunits, 5 of which are encoded in the nucleus.

The protein resides in the plastid. Its subcellular location is the chloroplast thylakoid membrane. The enzyme catalyses a plastoquinone + NADH + (n+1) H(+)(in) = a plastoquinol + NAD(+) + n H(+)(out). It carries out the reaction a plastoquinone + NADPH + (n+1) H(+)(in) = a plastoquinol + NADP(+) + n H(+)(out). In terms of biological role, NDH shuttles electrons from NAD(P)H:plastoquinone, via FMN and iron-sulfur (Fe-S) centers, to quinones in the photosynthetic chain and possibly in a chloroplast respiratory chain. The immediate electron acceptor for the enzyme in this species is believed to be plastoquinone. Couples the redox reaction to proton translocation, and thus conserves the redox energy in a proton gradient. The protein is NAD(P)H-quinone oxidoreductase subunit H, chloroplastic of Cicer arietinum (Chickpea).